Here is a 132-residue protein sequence, read N- to C-terminus: Small integral membrane protein 33 (132 aa).

Residues 1-28 form a disordered region; sequence MHQAGHYSWPSPAVNSSSEQEPQRQLPE. Residue Asn15 is glycosylated (N-linked (GlcNAc...) asparagine). A helical transmembrane segment spans residues 43–63; sequence PVVTVIVAVFVLLAVCIIVAV. The interval 99 to 132 is disordered; the sequence is PQDSPEEAPPGPLVPGSCPAPDGPRPSIDEVTCL.

The protein localises to the membrane. The polypeptide is Small integral membrane protein 33 (Homo sapiens (Human)).